A 969-amino-acid polypeptide reads, in one-letter code: RNA polymerase-associated protein RapA (969 aa).

Residues E164 to D334 form the Helicase ATP-binding domain. Position 177–184 (D177–T184) interacts with ATP. The short motif at D280–H283 is the DEAH box element. The Helicase C-terminal domain occupies R492–D646.

This sequence belongs to the SNF2/RAD54 helicase family. RapA subfamily. In terms of assembly, interacts with the RNAP. Has a higher affinity for the core RNAP than for the holoenzyme. Its ATPase activity is stimulated by binding to RNAP.

Transcription regulator that activates transcription by stimulating RNA polymerase (RNAP) recycling in case of stress conditions such as supercoiled DNA or high salt concentrations. Probably acts by releasing the RNAP, when it is trapped or immobilized on tightly supercoiled DNA. Does not activate transcription on linear DNA. Probably not involved in DNA repair. In Vibrio campbellii (strain ATCC BAA-1116), this protein is RNA polymerase-associated protein RapA.